Reading from the N-terminus, the 202-residue chain is Large ribosomal subunit protein bL9 (202 aa).

The disordered stretch occupies residues 168–202; the sequence is DEAGFTEDYDPNAEPGEIPTELQDEAPAAEATDEA. Residues 192-202 show a composition bias toward low complexity; the sequence is EAPAAEATDEA.

It belongs to the bacterial ribosomal protein bL9 family.

Binds to the 23S rRNA. This is Large ribosomal subunit protein bL9 from Rhizorhabdus wittichii (strain DSM 6014 / CCUG 31198 / JCM 15750 / NBRC 105917 / EY 4224 / RW1) (Sphingomonas wittichii).